Consider the following 258-residue polypeptide: Tryptophan synthase alpha chain (258 aa).

Catalysis depends on proton acceptor residues E52 and D63.

This sequence belongs to the TrpA family. Tetramer of two alpha and two beta chains.

The catalysed reaction is (1S,2R)-1-C-(indol-3-yl)glycerol 3-phosphate + L-serine = D-glyceraldehyde 3-phosphate + L-tryptophan + H2O. Its pathway is amino-acid biosynthesis; L-tryptophan biosynthesis; L-tryptophan from chorismate: step 5/5. Functionally, the alpha subunit is responsible for the aldol cleavage of indoleglycerol phosphate to indole and glyceraldehyde 3-phosphate. This Streptococcus pneumoniae (strain Taiwan19F-14) protein is Tryptophan synthase alpha chain.